Here is a 201-residue protein sequence, read N- to C-terminus: Receptor expression-enhancing protein 6 (201 aa).

The next 3 helical transmembrane spans lie at 36 to 56, 89 to 109, and 117 to 137; these read LAAG…GASL, WVVY…LFWF, and CAFL…LLYH.

It belongs to the DP1 family. In terms of assembly, interacts with STX3. Interacts with clathrin. Expressed in the inner segment of rod photoreceptors and outer plexiform layer of the retina (at protein level). Expressed in liver, but not detected in brain, muscle, kidney, retinal cone photoreceptors or retinal ganglion cells (at protein level). Highly expressed in the ganglion cell layer of the retina and in liver, and also detected at low levels in kidney and testis. Isoform 1: Expressed in the retina. Isoform 2: Expressed in liver.

The protein localises to the endoplasmic reticulum membrane. The protein resides in the cytoplasmic vesicle. Its subcellular location is the clathrin-coated vesicle membrane. Required for correct function and survival of retinal photoreceptors. Required for retinal development. In rod photoreceptors, facilitates stability and/or trafficking of guanylate cyclases and is required to maintain endoplasmic reticulum and mitochondrial homeostasis. May play a role in clathrin-coated intracellular vesicle trafficking of proteins from the endoplasmic reticulum to the retinal rod plasma membrane. This Mus musculus (Mouse) protein is Receptor expression-enhancing protein 6 (Reep6).